The following is a 311-amino-acid chain: Cell division control protein 2 homolog 3 (311 aa).

The 284-residue stretch at 23 to 306 (YNRMDILGEG…AKAALQHPWF (284 aa)) folds into the Protein kinase domain. ATP contacts are provided by residues 29-37 (LGEGTYGVV) and Lys-52. Thr-33 is modified (phosphothreonine). Tyr-34 carries the post-translational modification Phosphotyrosine. The active-site Proton acceptor is the Asp-145.

It belongs to the protein kinase superfamily. CMGC Ser/Thr protein kinase family. CDC2/CDKX subfamily. In terms of assembly, forms a stable but non-covalent complex with a regulatory subunit and with a cyclin.

The catalysed reaction is L-seryl-[protein] + ATP = O-phospho-L-seryl-[protein] + ADP + H(+). It carries out the reaction L-threonyl-[protein] + ATP = O-phospho-L-threonyl-[protein] + ADP + H(+). With respect to regulation, phosphorylation at Thr-33 or Tyr-34 inactivates the enzyme. Functionally, probably involved in the control of the cell cycle. This is Cell division control protein 2 homolog 3 (CRK3) from Trypanosoma brucei brucei.